A 645-amino-acid polypeptide reads, in one-letter code: Bifurcating [FeFe] hydrogenase alpha subunit (645 aa).

The region spanning methionine 1–glutamate 76 is the 2Fe-2S ferredoxin-type domain. Residues cysteine 34, cysteine 45, cysteine 48, and cysteine 60 each coordinate [2Fe-2S] cluster. In terms of domain architecture, 4Fe-4S His(Cys)3-ligated-type spans glutamate 76–glycine 115. The [4Fe-4S] cluster site is built by histidine 92, cysteine 96, cysteine 99, cysteine 105, cysteine 143, cysteine 146, cysteine 149, cysteine 153, cysteine 186, cysteine 189, cysteine 192, cysteine 196, cysteine 295, cysteine 350, cysteine 482, and cysteine 486. 4Fe-4S ferredoxin-type domains are found at residues serine 133–phenylalanine 164 and aspartate 178–aspartate 206. Position 486 (cysteine 486) interacts with Fe(2+). [2Fe-2S] cluster is bound by residues cysteine 575, cysteine 580, cysteine 612, and cysteine 616.

In terms of assembly, heterotrimer composed of HydA (alpha subunit), HydB (beta subunit) and HydC (gamma subunit). Near neutral and acidic pH conditions favor oligomerization of the heterotrimeric holoenzyme. Requires [2Fe-2S] cluster as cofactor. [4Fe-4S] cluster is required as a cofactor. The cofactor is Fe(2+).

The protein resides in the cytoplasm. The catalysed reaction is 2 H2 + 2 oxidized [2Fe-2S]-[ferredoxin] + NAD(+) = 2 reduced [2Fe-2S]-[ferredoxin] + NADH + 3 H(+). Functionally, catalyzes the oxidation of the physiological electron carriers NADH and reduced ferredoxin, coupled to the production of H(2). Acts as a bifurcating [FeFe] hydrogenase, which uses the exergonic oxidation of reduced ferredoxin to drive the unfavorable oxidation of NADH to produce H(2). The alpha subunit contains the catalytic H-cluster. This is Bifurcating [FeFe] hydrogenase alpha subunit from Thermotoga maritima (strain ATCC 43589 / DSM 3109 / JCM 10099 / NBRC 100826 / MSB8).